Here is a 57-residue protein sequence, read N- to C-terminus: MIQSLLLDLLPIRSFVMLALVVVGLQLVGVDVIGPAIDMARNFMLDTFSVSDLGSLV.

This is an uncharacterized protein from Halorubrum sp. PV6 (HRPV-1).